A 224-amino-acid polypeptide reads, in one-letter code: MKAVILLSGGLDSSTILYKAKADGCECHAISFDYQQRHRQELQSALTVAKKAAIAKHQVVNFDLRQWGGSALTDDAIDLPQQRSLDEMSQNIPVTYVPARNTIFLSFALGYAEAIAAERVYIGVNALDYSGYPDCRPDYIEAMQEVFRLGTKQGREGQPIKIVAPLINLKKTEIIQLGNELGVPWELTWSCYAGNDVACGVCDSCRLRLAAFAELGLVDPLVYA.

ATP is bound at residue 7–17 (LSGGLDSSTIL). 4 residues coordinate Zn(2+): Cys191, Cys199, Cys202, and Cys205.

It belongs to the QueC family. Zn(2+) serves as cofactor.

It catalyses the reaction 7-carboxy-7-deazaguanine + NH4(+) + ATP = 7-cyano-7-deazaguanine + ADP + phosphate + H2O + H(+). It participates in purine metabolism; 7-cyano-7-deazaguanine biosynthesis. Its function is as follows. Catalyzes the ATP-dependent conversion of 7-carboxy-7-deazaguanine (CDG) to 7-cyano-7-deazaguanine (preQ(0)). The sequence is that of 7-cyano-7-deazaguanine synthase from Nostoc punctiforme (strain ATCC 29133 / PCC 73102).